The chain runs to 464 residues: Argininosuccinate lyase (464 aa).

It belongs to the lyase 1 family. Argininosuccinate lyase subfamily.

It is found in the cytoplasm. It carries out the reaction 2-(N(omega)-L-arginino)succinate = fumarate + L-arginine. The protein operates within amino-acid biosynthesis; L-arginine biosynthesis; L-arginine from L-ornithine and carbamoyl phosphate: step 3/3. In Chlorobium phaeobacteroides (strain DSM 266 / SMG 266 / 2430), this protein is Argininosuccinate lyase.